Reading from the N-terminus, the 227-residue chain is NAD(P)H-hydrate epimerase (227 aa).

The region spanning 12-221 (SRLVDELAIA…DIGVPRALLE (210 aa)) is the YjeF N-terminal domain. 59 to 63 (NNGGD) is a (6S)-NADPHX binding site. K(+)-binding residues include Asn-60 and Asp-131. Residues 135–141 (GTGATGE) and Asp-164 contribute to the (6S)-NADPHX site. Thr-167 is a K(+) binding site.

Belongs to the NnrE/AIBP family. K(+) serves as cofactor.

It catalyses the reaction (6R)-NADHX = (6S)-NADHX. The enzyme catalyses (6R)-NADPHX = (6S)-NADPHX. In terms of biological role, catalyzes the epimerization of the S- and R-forms of NAD(P)HX, a damaged form of NAD(P)H that is a result of enzymatic or heat-dependent hydration. This is a prerequisite for the S-specific NAD(P)H-hydrate dehydratase to allow the repair of both epimers of NAD(P)HX. In Pirellula staleyi (strain ATCC 27377 / DSM 6068 / ICPB 4128) (Pirella staleyi), this protein is NAD(P)H-hydrate epimerase.